The following is a 72-amino-acid chain: UPF0270 protein YheU (72 aa).

It belongs to the UPF0270 family.

This chain is UPF0270 protein YheU, found in Salmonella dublin (strain CT_02021853).